The sequence spans 56 residues: Small ribosomal subunit protein uS14 (56 aa).

Zn(2+)-binding residues include cysteine 21, cysteine 24, cysteine 39, and cysteine 42.

Belongs to the universal ribosomal protein uS14 family. Requires Zn(2+) as cofactor.

This chain is Small ribosomal subunit protein uS14 (RPS29), found in Griffithsia japonica (Red alga).